We begin with the raw amino-acid sequence, 190 residues long: Peptidyl-tRNA hydrolase (190 aa).

Tyr14 serves as a coordination point for tRNA. Residue His19 is the Proton acceptor of the active site. TRNA contacts are provided by Tyr63, Asn65, and Asn112.

The protein belongs to the PTH family. In terms of assembly, monomer.

It localises to the cytoplasm. The enzyme catalyses an N-acyl-L-alpha-aminoacyl-tRNA + H2O = an N-acyl-L-amino acid + a tRNA + H(+). Functionally, hydrolyzes ribosome-free peptidyl-tRNAs (with 1 or more amino acids incorporated), which drop off the ribosome during protein synthesis, or as a result of ribosome stalling. In terms of biological role, catalyzes the release of premature peptidyl moieties from peptidyl-tRNA molecules trapped in stalled 50S ribosomal subunits, and thus maintains levels of free tRNAs and 50S ribosomes. The polypeptide is Peptidyl-tRNA hydrolase (Kosmotoga olearia (strain ATCC BAA-1733 / DSM 21960 / TBF 19.5.1)).